The following is a 571-amino-acid chain: Proline--tRNA ligase (571 aa).

This sequence belongs to the class-II aminoacyl-tRNA synthetase family. ProS type 1 subfamily. Homodimer.

It is found in the cytoplasm. The enzyme catalyses tRNA(Pro) + L-proline + ATP = L-prolyl-tRNA(Pro) + AMP + diphosphate. In terms of biological role, catalyzes the attachment of proline to tRNA(Pro) in a two-step reaction: proline is first activated by ATP to form Pro-AMP and then transferred to the acceptor end of tRNA(Pro). As ProRS can inadvertently accommodate and process non-cognate amino acids such as alanine and cysteine, to avoid such errors it has two additional distinct editing activities against alanine. One activity is designated as 'pretransfer' editing and involves the tRNA(Pro)-independent hydrolysis of activated Ala-AMP. The other activity is designated 'posttransfer' editing and involves deacylation of mischarged Ala-tRNA(Pro). The misacylated Cys-tRNA(Pro) is not edited by ProRS. The sequence is that of Proline--tRNA ligase from Vibrio atlanticus (strain LGP32) (Vibrio splendidus (strain Mel32)).